The following is a 376-amino-acid chain: MDKNFEGKQFTGVIKFTPPLYKQRYEFVQDLVRKYEPKKVADLGCADCTLLWMLKFCSCIEVLAGLDICETVMKEKMHRLTPLPADYLEPSERSLIVTLHQGSVAHKDPCMLGFDLVTCIELIEHLQESELEKFPEVVFGFMAPNMVVISTPNSEFNTLLPGVTVFRHPDHKFEWDRAQFQSWAQDTAERYEYSVEFTGVGSPPTGMEDVGFCTQIGVFVKKYPQTREPVQREKPTEAAYKTVFKAVYPSLKDEKYLQNAVVSEVMFRAQLIKRSLLDHLLSECEEYNDDPTERKLKLQCSVNCFSEDVETLAVEKSTEPFVSGNVIYIPLRKIFSVPKVNQLCGTFEKFCRLITGKVTLNSDSSALMLDTENEEN.

3 residues coordinate S-adenosyl-L-methionine: Thr-49, Asp-67, and Ser-103. 4 residues coordinate Mg(2+): Glu-121, Glu-124, His-125, and His-171.

The protein belongs to the methyltransferase superfamily. HEN1 family. It depends on Mg(2+) as a cofactor.

The protein localises to the cytoplasm. It carries out the reaction small RNA 3'-end nucleotide + S-adenosyl-L-methionine = small RNA 3'-end 2'-O-methylnucleotide + S-adenosyl-L-homocysteine + H(+). Methyltransferase that adds a 2'-O-methyl group at the 3'-end of piRNAs, a class of 24 to 30 nucleotide RNAs that are generated by a Dicer-independent mechanism and are primarily derived from transposons and other repeated sequence elements. This probably protects the 3'-end of piRNAs from uridylation activity and subsequent degradation. Stabilization of piRNAs is essential for gametogenesis. This is Small RNA 2'-O-methyltransferase (HENMT1) from Gallus gallus (Chicken).